We begin with the raw amino-acid sequence, 1076 residues long: DNA-directed RNA polymerase subunit beta (1076 aa).

This sequence belongs to the RNA polymerase beta chain family. In terms of assembly, in plastids the minimal PEP RNA polymerase catalytic core is composed of four subunits: alpha, beta, beta', and beta''. When a (nuclear-encoded) sigma factor is associated with the core the holoenzyme is formed, which can initiate transcription.

It is found in the plastid. Its subcellular location is the chloroplast. The enzyme catalyses RNA(n) + a ribonucleoside 5'-triphosphate = RNA(n+1) + diphosphate. In terms of biological role, DNA-dependent RNA polymerase catalyzes the transcription of DNA into RNA using the four ribonucleoside triphosphates as substrates. The polypeptide is DNA-directed RNA polymerase subunit beta (Hordeum vulgare (Barley)).